The primary structure comprises 627 residues: DNA mismatch repair protein MutL (627 aa).

Basic and acidic residues predominate over residues 354–364 (DEKPPEKKVPE). The tract at residues 354–374 (DEKPPEKKVPEKSTAPSYSPM) is disordered.

This sequence belongs to the DNA mismatch repair MutL/HexB family.

This protein is involved in the repair of mismatches in DNA. It is required for dam-dependent methyl-directed DNA mismatch repair. May act as a 'molecular matchmaker', a protein that promotes the formation of a stable complex between two or more DNA-binding proteins in an ATP-dependent manner without itself being part of a final effector complex. Overexpression of mutSL partially suppresses the high spontaneous mutation frequency of a ytkD/mutM/mutY triple disruption which lacks the system required to prevent damage by oxidized guanine (8-oxo-dGTP). This suggests that MutSL also functions to repair mismatches due to oxidative stress in both growing and stationary phase cells. In Bacillus subtilis (strain 168), this protein is DNA mismatch repair protein MutL.